A 126-amino-acid polypeptide reads, in one-letter code: Glycine cleavage system H protein (126 aa).

A Lipoyl-binding domain is found at 21 to 103 (TVTVGISNHA…YEGGWIARIK (83 aa)). Lys-62 carries the post-translational modification N6-lipoyllysine.

Belongs to the GcvH family. As to quaternary structure, the glycine cleavage system is composed of four proteins: P, T, L and H. Requires (R)-lipoate as cofactor.

In terms of biological role, the glycine cleavage system catalyzes the degradation of glycine. The H protein shuttles the methylamine group of glycine from the P protein to the T protein. In Aliivibrio salmonicida (strain LFI1238) (Vibrio salmonicida (strain LFI1238)), this protein is Glycine cleavage system H protein.